The following is a 176-amino-acid chain: Inorganic pyrophosphatase (176 aa).

Residues Lys-30, Arg-44, and Tyr-56 each coordinate substrate. Mg(2+)-binding residues include Asp-66, Asp-71, and Asp-103. Residue Tyr-142 participates in substrate binding.

This sequence belongs to the PPase family. Homohexamer. Requires Mg(2+) as cofactor.

It is found in the cytoplasm. The catalysed reaction is diphosphate + H2O = 2 phosphate + H(+). Catalyzes the hydrolysis of inorganic pyrophosphate (PPi) forming two phosphate ions. The protein is Inorganic pyrophosphatase of Vibrio vulnificus (strain CMCP6).